The sequence spans 436 residues: 3-ketoacyl-CoA thiolase (436 aa).

Cysteine 99 serves as the catalytic Acyl-thioester intermediate. Catalysis depends on proton acceptor residues histidine 392 and cysteine 422.

Belongs to the thiolase-like superfamily. Thiolase family. As to quaternary structure, heterotetramer of two alpha chains (FadJ) and two beta chains (FadI).

Its subcellular location is the cytoplasm. The catalysed reaction is an acyl-CoA + acetyl-CoA = a 3-oxoacyl-CoA + CoA. It participates in lipid metabolism; fatty acid beta-oxidation. Functionally, catalyzes the final step of fatty acid oxidation in which acetyl-CoA is released and the CoA ester of a fatty acid two carbons shorter is formed. This Shigella boydii serotype 18 (strain CDC 3083-94 / BS512) protein is 3-ketoacyl-CoA thiolase.